A 420-amino-acid polypeptide reads, in one-letter code: Septin-8-A (420 aa).

Residues 39–305 enclose the Septin-type G domain; it reads QGFCFNILCV…ELYRRCKLEE (267 aa). Residues 49–56 form a G1 motif region; that stretch reads GETGIGKS. Residues 49 to 56, glycine 104, 185 to 193, glycine 239, and arginine 254 contribute to the GTP site; these read GETGIGKS and KADTISKSE. The segment at 101 to 104 is G3 motif; that stretch reads DTVG. The tract at residues 184–187 is G4 motif; the sequence is AKAD. The stretch at 321–407 forms a coiled coil; it reads QETYEAKRKE…RRKVAAETLS (87 aa). The tract at residues 393–420 is disordered; that stretch reads MNAFNRRKVAAETLSLSQPLKKDKDKKN.

The protein belongs to the TRAFAC class TrmE-Era-EngA-EngB-Septin-like GTPase superfamily. Septin GTPase family.

The protein is Septin-8-A (sept8a) of Danio rerio (Zebrafish).